Reading from the N-terminus, the 90-residue chain is Conotoxin Rg9.1 (90 aa).

A signal peptide spans 1–20 (MHLSLARSAVLILLLLFALG). The propeptide occupies 21–60 (NFVGVQPGQITRDADHGINLRSLRKQMSRSPLVKGAFCGQ). Disulfide bonds link Cys-58/Cys-71, Cys-62/Cys-73, and Cys-67/Cys-80.

The protein belongs to the conotoxin P superfamily. Expressed by the venom duct.

The protein resides in the secreted. In terms of biological role, probable neurotoxin that inhibits ion channels. The polypeptide is Conotoxin Rg9.1 (Conus regius (Crown cone)).